A 33-amino-acid polypeptide reads, in one-letter code: Dermaseptin-H9 (33 aa).

Residue L33 is modified to Leucine amide.

This sequence belongs to the frog skin active peptide (FSAP) family. Dermaseptin subfamily. In terms of tissue distribution, expressed by the skin glands.

It localises to the secreted. Functionally, has antimicrobial activity. The protein is Dermaseptin-H9 of Pithecopus hypochondrialis (Orange-legged leaf frog).